Reading from the N-terminus, the 290-residue chain is Small ribosomal subunit biogenesis GTPase RsgA (290 aa).

In terms of domain architecture, CP-type G spans 62–213 (KNSLVRPPIV…IADTPGFSSL (152 aa)). Residues 111–114 (SKMD) and 156–164 (GQTGVGKST) each bind GTP. Zn(2+) contacts are provided by C237, C242, H244, and C250.

Belongs to the TRAFAC class YlqF/YawG GTPase family. RsgA subfamily. In terms of assembly, monomer. Associates with 30S ribosomal subunit, binds 16S rRNA. It depends on Zn(2+) as a cofactor.

The protein resides in the cytoplasm. In terms of biological role, one of several proteins that assist in the late maturation steps of the functional core of the 30S ribosomal subunit. Helps release RbfA from mature subunits. May play a role in the assembly of ribosomal proteins into the subunit. Circularly permuted GTPase that catalyzes slow GTP hydrolysis, GTPase activity is stimulated by the 30S ribosomal subunit. This is Small ribosomal subunit biogenesis GTPase RsgA from Streptococcus pyogenes serotype M3 (strain ATCC BAA-595 / MGAS315).